Here is a 335-residue protein sequence, read N- to C-terminus: Large ribosomal subunit protein uL10 (335 aa).

Positions 300–335 are disordered; that stretch reads QVSEQAAEKKEEKKEEEKKGPSEEEIGGGLSSLFGG. Residues 305-321 are compositionally biased toward basic and acidic residues; it reads AAEKKEEKKEEEKKGPS. A compositionally biased stretch (gly residues) spans 326 to 335; the sequence is GGGLSSLFGG.

The protein belongs to the universal ribosomal protein uL10 family. In terms of assembly, part of the 50S ribosomal subunit. Forms part of the ribosomal stalk which helps the ribosome interact with GTP-bound translation factors. Forms a heptameric L10(L12)2(L12)2(L12)2 complex, where L10 forms an elongated spine to which the L12 dimers bind in a sequential fashion.

Forms part of the ribosomal stalk, playing a central role in the interaction of the ribosome with GTP-bound translation factors. The polypeptide is Large ribosomal subunit protein uL10 (Sulfolobus acidocaldarius (strain ATCC 33909 / DSM 639 / JCM 8929 / NBRC 15157 / NCIMB 11770)).